A 117-amino-acid chain; its full sequence is B-box domain protein 30 (117 aa).

A B box-type; atypical zinc finger spans residues 27–73 (KAPVSCELCGENATVYCEADAAFLCRKCDRWVHSANFLARRHLRRVI). 4 residues coordinate Zn(2+): Cys-32, Cys-35, Cys-54, and His-59. The PFVFL signature appears at 113–117 (PFVFL).

In terms of assembly, interacts with CO (via B-box) and with TPL (via PFVFL motif). In terms of tissue distribution, highly expressed in shoot apical meristems and in vascular tissues of leaves. Also detected in petioles.

Its subcellular location is the nucleus. In terms of biological role, developmental regulator acting by forming heterodimeric complexes, that sequester CO and CO-like (COL) proteins into non-functional complexes. Engages CO and the transcriptional repressor TPL in a tripartite complex. Involved in the CO-mediated long-day flowering-promotion pathway. This chain is B-box domain protein 30, found in Arabidopsis thaliana (Mouse-ear cress).